Reading from the N-terminus, the 299-residue chain is Probable alpha-L-glutamate ligase (299 aa).

The ATP-grasp domain maps to 104 to 287 (LQLLAREGIE…VSGKIIEFLE (184 aa)). Residues Lys141, 178–179 (EF), Asp187, and 211–213 (RSN) each bind ATP. Asp248, Glu260, and Asn262 together coordinate Mg(2+). Mn(2+) contacts are provided by Asp248, Glu260, and Asn262.

The protein belongs to the RimK family. Mg(2+) is required as a cofactor. The cofactor is Mn(2+).

This chain is Probable alpha-L-glutamate ligase, found in Trichodesmium erythraeum (strain IMS101).